Reading from the N-terminus, the 98-residue chain is Essential MCU regulator, mitochondrial (98 aa).

The helical transmembrane segment at 52-72 threads the bilayer; that stretch reads ITPFGLFGIIATVIPGLLIGA.

Belongs to the SMDT1/EMRE family.

Its subcellular location is the mitochondrion inner membrane. Its function is as follows. Essential regulatory subunit of the mitochondrial calcium uniporter (mcu) channel, a protein that mediates calcium uptake into mitochondria. The protein is Essential MCU regulator, mitochondrial of Anopheles gambiae (African malaria mosquito).